Consider the following 607-residue polypeptide: Elongation factor 4 (607 aa).

One can recognise a tr-type G domain in the interval 11 to 193 (EKIRNFSIIA…QIVEKVPAPQ (183 aa)). GTP is bound by residues 23-28 (DHGKST) and 140-143 (NKID).

Belongs to the TRAFAC class translation factor GTPase superfamily. Classic translation factor GTPase family. LepA subfamily.

It localises to the cell membrane. It carries out the reaction GTP + H2O = GDP + phosphate + H(+). Required for accurate and efficient protein synthesis under certain stress conditions. May act as a fidelity factor of the translation reaction, by catalyzing a one-codon backward translocation of tRNAs on improperly translocated ribosomes. Back-translocation proceeds from a post-translocation (POST) complex to a pre-translocation (PRE) complex, thus giving elongation factor G a second chance to translocate the tRNAs correctly. Binds to ribosomes in a GTP-dependent manner. The chain is Elongation factor 4 from Lactococcus lactis subsp. cremoris (strain SK11).